Here is a 100-residue protein sequence, read N- to C-terminus: NADH-quinone oxidoreductase subunit K (100 aa).

3 helical membrane passes run 1 to 21 (MIGLNHYLIVSGLLFCIGLAG), 28 to 48 (ILLLFFSTEIMLNAINIGFIA), and 64 to 84 (FIIAIAASEVAIGLGLVILWF).

It belongs to the complex I subunit 4L family. NDH-1 is composed of 14 different subunits. Subunits NuoA, H, J, K, L, M, N constitute the membrane sector of the complex.

It localises to the cell inner membrane. It catalyses the reaction a quinone + NADH + 5 H(+)(in) = a quinol + NAD(+) + 4 H(+)(out). In terms of biological role, NDH-1 shuttles electrons from NADH, via FMN and iron-sulfur (Fe-S) centers, to quinones in the respiratory chain. The immediate electron acceptor for the enzyme in this species is believed to be ubiquinone. Couples the redox reaction to proton translocation (for every two electrons transferred, four hydrogen ions are translocated across the cytoplasmic membrane), and thus conserves the redox energy in a proton gradient. This Helicobacter acinonychis (strain Sheeba) protein is NADH-quinone oxidoreductase subunit K.